A 281-amino-acid polypeptide reads, in one-letter code: INSIG family protein (281 aa).

Over 1-93 (MSRKEIYEPR…FIDYSSLITF (93 aa)) the chain is Cytoplasmic. Phosphoserine is present on serine 28. A helical membrane pass occupies residues 94–120 (FCKLCVIFGLGFVFTYLAEQIVQDAKL). Topologically, residues 121 to 134 (PLLTVNLKSWKFEP) are lumenal. The chain crosses the membrane as a helical span at residues 135–159 (PWPAIFGFVAVILGLSYRRMDTKYP). The Cytoplasmic segment spans residues 160 to 170 (LGAAPLRPSQS). A helical transmembrane segment spans residues 171-186 (SKWQWISRYLAAFATL). Residues 187 to 189 (LLS) lie on the Lumenal side of the membrane. The chain crosses the membrane as a helical span at residues 190–215 (MKKLLFISNSHSIVALVASSASIWYI). Residues 216-221 (FDRSRN) are Cytoplasmic-facing. The helical transmembrane segment at 222 to 256 (GIILSTITSVLGSILYYNLVDTSKIELNGVEFPEI) threads the bilayer. The Lumenal segment spans residues 257–260 (QFRL). A helical transmembrane segment spans residues 261-281 (WIPMILFSASTIVGNAGRLLF).

Belongs to the INSIG family.

It localises to the endoplasmic reticulum membrane. This chain is INSIG family protein (ins1), found in Schizosaccharomyces pombe (strain 972 / ATCC 24843) (Fission yeast).